The following is a 182-amino-acid chain: ATP synthase subunit delta (182 aa).

This sequence belongs to the ATPase delta chain family. F-type ATPases have 2 components, F(1) - the catalytic core - and F(0) - the membrane proton channel. F(1) has five subunits: alpha(3), beta(3), gamma(1), delta(1), epsilon(1). CF(0) has four main subunits: a(1), b(1), b'(1) and c(10-14). The alpha and beta chains form an alternating ring which encloses part of the gamma chain. F(1) is attached to F(0) by a central stalk formed by the gamma and epsilon chains, while a peripheral stalk is formed by the delta, b and b' chains.

It is found in the cellular thylakoid membrane. Functionally, f(1)F(0) ATP synthase produces ATP from ADP in the presence of a proton or sodium gradient. F-type ATPases consist of two structural domains, F(1) containing the extramembraneous catalytic core and F(0) containing the membrane proton channel, linked together by a central stalk and a peripheral stalk. During catalysis, ATP synthesis in the catalytic domain of F(1) is coupled via a rotary mechanism of the central stalk subunits to proton translocation. In terms of biological role, this protein is part of the stalk that links CF(0) to CF(1). It either transmits conformational changes from CF(0) to CF(1) or is implicated in proton conduction. The sequence is that of ATP synthase subunit delta from Synechococcus sp. (strain CC9902).